The chain runs to 125 residues: Large ribosomal subunit protein bL12 (125 aa).

Belongs to the bacterial ribosomal protein bL12 family. As to quaternary structure, homodimer. Part of the ribosomal stalk of the 50S ribosomal subunit. Forms a multimeric L10(L12)X complex, where L10 forms an elongated spine to which 2 to 4 L12 dimers bind in a sequential fashion. Binds GTP-bound translation factors.

Its function is as follows. Forms part of the ribosomal stalk which helps the ribosome interact with GTP-bound translation factors. Is thus essential for accurate translation. This chain is Large ribosomal subunit protein bL12, found in Methylibium petroleiphilum (strain ATCC BAA-1232 / LMG 22953 / PM1).